The sequence spans 1393 residues: DNA-directed RNA polymerase subunit beta' (1393 aa).

Residues cysteine 71, cysteine 73, cysteine 86, and cysteine 89 each contribute to the Zn(2+) site. Residues aspartate 462, aspartate 464, and aspartate 466 each contribute to the Mg(2+) site. Residues cysteine 811, cysteine 885, cysteine 892, and cysteine 895 each coordinate Zn(2+).

It belongs to the RNA polymerase beta' chain family. As to quaternary structure, the RNAP catalytic core consists of 2 alpha, 1 beta, 1 beta' and 1 omega subunit. When a sigma factor is associated with the core the holoenzyme is formed, which can initiate transcription. The cofactor is Mg(2+). It depends on Zn(2+) as a cofactor.

It carries out the reaction RNA(n) + a ribonucleoside 5'-triphosphate = RNA(n+1) + diphosphate. DNA-dependent RNA polymerase catalyzes the transcription of DNA into RNA using the four ribonucleoside triphosphates as substrates. This Azorhizobium caulinodans (strain ATCC 43989 / DSM 5975 / JCM 20966 / LMG 6465 / NBRC 14845 / NCIMB 13405 / ORS 571) protein is DNA-directed RNA polymerase subunit beta'.